A 568-amino-acid polypeptide reads, in one-letter code: Mannitol 2-dehydrogenase (568 aa).

109–120 (IVHVGVGGFHRA) is an NAD(+) binding site.

It belongs to the mannitol dehydrogenase family. Monomer.

The enzyme catalyses D-mannitol + NAD(+) = D-fructose + NADH + H(+). Its function is as follows. Catalyzes the NAD(H)-dependent interconversion of D-fructose and D-mannitol in the mannitol metabolic pathway. The sequence is that of Mannitol 2-dehydrogenase from Phaeosphaeria nodorum (strain SN15 / ATCC MYA-4574 / FGSC 10173) (Glume blotch fungus).